We begin with the raw amino-acid sequence, 530 residues long: Netrin-G2 (530 aa).

Residues 1–17 (MLHLLALFLHCLPLASG) form the signal peptide. Disulfide bonds link Cys22-Cys39, Cys61-Cys81, and Cys69-Cys77. Positions 35–286 (EFYACQPKVM…AISNIEVIGR (252 aa)) constitute a Laminin N-terminal domain. The segment at 69 to 88 (CSHENPYLCSNECDASNPDL) is NGL discriminant loop I. N-linked (GlcNAc...) asparagine glycans are attached at residues Asn122 and Asn128. Cys171 and Cys195 are oxidised to a cystine. Positions 201 to 203 (RWA) are NGL discriminant loop II. The NGL discriminant loop III stretch occupies residues 264–267 (TYVQ). 15 disulfide bridges follow: Cys287–Cys296, Cys289–Cys305, Cys307–Cys316, Cys319–Cys344, Cys353–Cys362, Cys355–Cys373, Cys376–Cys385, Cys388–Cys406, Cys409–Cys421, Cys411–Cys427, Cys429–Cys438, Cys441–Cys451, Cys456–Cys469, Cys463–Cys475, and Cys477–Cys486. 3 Laminin EGF-like domains span residues 287-346 (CKCN…ACAT), 353-408 (CECY…VCIE), and 409-453 (CNCN…GCYP). An N-linked (GlcNAc...) asparagine glycan is attached at Asn310. Asn395 is a glycosylation site (N-linked (GlcNAc...) asparagine). Residue Asn422 is glycosylated (N-linked (GlcNAc...) asparagine). Residue Gly507 is the site of GPI-anchor amidated glycine attachment. The propeptide at 508–530 (AAPRPATLLGCLLLLGLAARLGR) is removed in mature form.

Interacts with LRRC4. N-glycosylated.

The protein localises to the cell membrane. Functionally, involved in controlling patterning and neuronal circuit formation at the laminar, cellular, subcellular and synaptic levels. Promotes neurite outgrowth of both axons and dendrites. The sequence is that of Netrin-G2 from Homo sapiens (Human).